The following is a 754-amino-acid chain: Aspartyl/asparaginyl beta-hydroxylase (754 aa).

The tract at residues 1-48 (MAPRKNAKGGGGNSSSSSSGSPTGCTSGGSSSPGARRETKQGGLKNGR) is disordered. The Cytoplasmic portion of the chain corresponds to 1 to 56 (MAPRKNAKGGGGNSSSSSSGSPTGCTSGGSSSPGARRETKQGGLKNGRKGGLSGSS). Over residues 14–34 (SSSSSSGSPTGCTSGGSSSPG) the composition is skewed to low complexity. S15 carries the phosphoserine modification. A helical; Signal-anchor for type II membrane protein membrane pass occupies residues 57 to 77 (FFTWFMVIALLGVWTSVAVVW). Topologically, residues 78–754 (FDLVDYEEVL…PHQRRSLPAI (677 aa)) are lumenal. N96 is a glycosylation site (N-linked (GlcNAc...) asparagine). Ca(2+) is bound by residues D109, D111, D113, D115, and D120. Disordered regions lie at residues 176-197 (VYSE…ELQP) and 247-326 (EQEN…KKKK). Composition is skewed to basic and acidic residues over residues 261-284 (DAER…DHAV) and 309-318 (TNKKADEPGK). TPR repeat units lie at residues 337–370 (IKAE…YPQS), 378–411 (AQCE…PDAP), 450–483 (TALK…TPND), 485–517 (FAKV…GDPG), and 521–553 (GRFY…GHFA). N466 is a glycosylation site (N-linked (GlcNAc...) asparagine). W621 lines the 2-oxoglutarate pocket. A disulfide bond links C637 and C644. S664 serves as a coordination point for 2-oxoglutarate. H675 serves as a coordination point for Fe cation. Residue 684-686 (RMH) participates in 2-oxoglutarate binding. An N-linked (GlcNAc...) asparagine glycan is attached at N702. Residue H721 coordinates Fe cation. R731 contributes to the 2-oxoglutarate binding site.

The protein belongs to the aspartyl/asparaginyl beta-hydroxylase family. Monomer. Requires Fe cation as cofactor. In terms of processing, might be processed to the 56 kDa (AA 289-754) or 52 kDa (AA 311-754) forms in the lumen of the endoplasmic reticulum.

It localises to the endoplasmic reticulum membrane. The enzyme catalyses L-aspartyl-[protein] + 2-oxoglutarate + O2 = 3-hydroxy-L-aspartyl-[protein] + succinate + CO2. In terms of biological role, specifically hydroxylates an Asp or Asn residue in certain epidermal growth factor-like (EGF) domains of a number of proteins. The polypeptide is Aspartyl/asparaginyl beta-hydroxylase (ASPH) (Bos taurus (Bovine)).